Reading from the N-terminus, the 268-residue chain is Small ribosomal subunit protein mS43 (268 aa).

The N-terminal 23 residues, 1–23 (MLNTGLRKGLALSPITHLLKRCS), are a transit peptide targeting the mitochondrion.

Belongs to the mitochondrion-specific ribosomal protein mS43 family. As to quaternary structure, component of the mitochondrial small ribosomal subunit (mt-SSU). Mature yeast 74S mitochondrial ribosomes consist of a small (37S) and a large (54S) subunit. The 37S small subunit contains a 15S ribosomal RNA (15S mt-rRNA) and at least 32 different proteins. The 54S large subunit contains a 21S rRNA (21S mt-rRNA) and at least 45 different proteins. mS43 forms a dimer with mS42, building a large protuberance adjacent to the mRNA channel exit in the mt-SSU body.

Its subcellular location is the mitochondrion. Its function is as follows. Component of the mitochondrial ribosome (mitoribosome), a dedicated translation machinery responsible for the synthesis of mitochondrial genome-encoded proteins, including at least some of the essential transmembrane subunits of the mitochondrial respiratory chain. The mitoribosomes are attached to the mitochondrial inner membrane and translation products are cotranslationally integrated into the membrane. This Schizosaccharomyces pombe (strain 972 / ATCC 24843) (Fission yeast) protein is Small ribosomal subunit protein mS43.